Consider the following 429-residue polypeptide: Glutamate-1-semialdehyde 2,1-aminomutase 2 (429 aa).

Lysine 268 is modified (N6-(pyridoxal phosphate)lysine).

Belongs to the class-III pyridoxal-phosphate-dependent aminotransferase family. HemL subfamily. As to quaternary structure, homodimer. Pyridoxal 5'-phosphate is required as a cofactor.

Its subcellular location is the cytoplasm. It catalyses the reaction (S)-4-amino-5-oxopentanoate = 5-aminolevulinate. It functions in the pathway porphyrin-containing compound metabolism; protoporphyrin-IX biosynthesis; 5-aminolevulinate from L-glutamyl-tRNA(Glu): step 2/2. This is Glutamate-1-semialdehyde 2,1-aminomutase 2 from Bacillus mycoides (strain KBAB4) (Bacillus weihenstephanensis).